Here is a 346-residue protein sequence, read N- to C-terminus: Phosphoribosylformylglycinamidine cyclo-ligase (346 aa).

It belongs to the AIR synthase family.

The protein resides in the cytoplasm. The enzyme catalyses 2-formamido-N(1)-(5-O-phospho-beta-D-ribosyl)acetamidine + ATP = 5-amino-1-(5-phospho-beta-D-ribosyl)imidazole + ADP + phosphate + H(+). It participates in purine metabolism; IMP biosynthesis via de novo pathway; 5-amino-1-(5-phospho-D-ribosyl)imidazole from N(2)-formyl-N(1)-(5-phospho-D-ribosyl)glycinamide: step 2/2. This chain is Phosphoribosylformylglycinamidine cyclo-ligase, found in Aliivibrio fischeri (strain ATCC 700601 / ES114) (Vibrio fischeri).